A 114-amino-acid polypeptide reads, in one-letter code: Hydrogenase maturation factor HypA (114 aa).

Histidine 2 provides a ligand contact to Ni(2+). Zn(2+) contacts are provided by cysteine 70, cysteine 73, cysteine 86, and cysteine 89.

This sequence belongs to the HypA/HybF family.

Functionally, involved in the maturation of [NiFe] hydrogenases. Required for nickel insertion into the metal center of the hydrogenase. In Rippkaea orientalis (strain PCC 8801 / RF-1) (Cyanothece sp. (strain PCC 8801)), this protein is Hydrogenase maturation factor HypA.